A 375-amino-acid chain; its full sequence is Ribosomal RNA large subunit methyltransferase F (375 aa).

2 disordered regions span residues 1-39 and 262-281; these read MKNN…AAVK and NQRK…GKPT. The span at 27–38 shows a compositional bias: basic residues; the sequence is AKPKRVKKKAAV.

Belongs to the methyltransferase superfamily. METTL16/RlmF family.

The protein resides in the cytoplasm. It carries out the reaction adenosine(1618) in 23S rRNA + S-adenosyl-L-methionine = N(6)-methyladenosine(1618) in 23S rRNA + S-adenosyl-L-homocysteine + H(+). Specifically methylates the adenine in position 1618 of 23S rRNA. The sequence is that of Ribosomal RNA large subunit methyltransferase F from Vibrio parahaemolyticus serotype O3:K6 (strain RIMD 2210633).